The chain runs to 677 residues: Potassium channel KAT1 (677 aa).

Topologically, residues 1 to 63 (MSISWTRNFF…PFNPRYRAWE (63 aa)) are cytoplasmic. The helical transmembrane segment at 64–84 (MWLVLLVIYSAWICPFQFAFI) threads the bilayer. Residues 85–90 (TYKKDA) are Extracellular-facing. The helical transmembrane segment at 91–111 (IFIIDNIVNGFFAIDIILTFF) threads the bilayer. The Cytoplasmic segment spans residues 112 to 134 (VAYLDSHSYLLVDSPKKIAIRYL). The chain crosses the membrane as a helical span at residues 135-155 (STWFAFDVCSTAPFQPLSLLF). The Extracellular portion of the chain corresponds to 156 to 165 (NYNGSELGFR). The chain crosses the membrane as a helical; Voltage-sensor span at residues 166–186 (ILSMLRLWRLRRVSSLFARLE). Topologically, residues 187–200 (KDIRFNYFWIRCTK) are cytoplasmic. The helical transmembrane segment at 201 to 221 (LISVTLFAIHCAGCFNYLIAD) threads the bilayer. The Extracellular portion of the chain corresponds to 222-248 (RYPNPRKTWIGAVYPNFKEASLWNRYV). The segment at residues 249 to 268 (TALYWSITTLTTTGYGDFHA) is an intramembrane region (pore-forming). Over 269–272 (ENPR) the chain is Extracellular. The helical transmembrane segment at 273–293 (EMLFDIFFMMFNLGLTAYLIG) threads the bilayer. Over 294 to 677 (NMTNLVVHWT…DGDHLYFSSN (384 aa)) the chain is Cytoplasmic. 377–496 (LFQGVSRNFL…RVIMNNLFMK (120 aa)) is an a nucleoside 3',5'-cyclic phosphate binding site. The span at 568–577 (IERAKVERSS) shows a compositional bias: basic and acidic residues. Positions 568 to 601 (IERAKVERSSSETAGRSYANDSSKKDPYCSSSNQ) are disordered. One can recognise a KHA domain in the interval 612–677 (RVTIHMMSES…DGDHLYFSSN (66 aa)).

Belongs to the potassium channel family. Plant (TC 1.A.1.4) subfamily. In terms of assembly, the potassium channel is probably composed of a homo- or heterotetrameric complex of pore-forming subunits. May interact with AKT2 and KAT2. Interacts with SLAC1 and SLAH3. In terms of tissue distribution, expressed in guard cells, and in roots.

Its subcellular location is the membrane. Highly selective inward-rectifying potassium channel. This voltage-gated channel could mediate long-term potassium influx into guard cells leading to stomatal opening. Assuming opened or closed conformations in response to the voltage difference across the membrane, the channel is activated by hyperpolarization. The channel activity is enhanced upon external acidification. Also permeable to ammonium ions. Blocked by tetraethylammonium and barium ions. The polypeptide is Potassium channel KAT1 (KAT1) (Arabidopsis thaliana (Mouse-ear cress)).